The primary structure comprises 32 residues: Cytochrome b6-f complex subunit 7 (32 aa).

The chain crosses the membrane as a helical span at residues 5 to 25 (IFTVAGVMWALVLTGLSVGFG).

The protein belongs to the PetM family. In terms of assembly, the 4 large subunits of the cytochrome b6-f complex are cytochrome b6, subunit IV (17 kDa polypeptide, PetD), cytochrome f and the Rieske protein, while the 4 small subunits are PetG, PetL, PetM and PetN. The complex functions as a dimer.

Its subcellular location is the plastid. It is found in the chloroplast thylakoid membrane. Functionally, component of the cytochrome b6-f complex, which mediates electron transfer between photosystem II (PSII) and photosystem I (PSI), cyclic electron flow around PSI, and state transitions. This Emiliania huxleyi (Coccolithophore) protein is Cytochrome b6-f complex subunit 7.